The primary structure comprises 327 residues: Aldo-keto reductase family 1 member A1 (327 aa).

NADP(+)-binding positions include 13–22 (GQKIPLIGLG), threonine 23, tryptophan 24, and aspartate 47. The active-site Proton donor is the tyrosine 52. NADP(+) contacts are provided by serine 164, asparagine 165, serine 213, leucine 215, serine 217, lysine 265, serine 266, valine 267, threonine 268, arginine 271, glutamine 274, and asparagine 275.

This sequence belongs to the aldo/keto reductase family.

The protein localises to the cytoplasm. Its subcellular location is the cytosol. It localises to the apical cell membrane. The enzyme catalyses a primary alcohol + NADP(+) = an aldehyde + NADPH + H(+). It catalyses the reaction S-nitroso-CoA + NADPH + H(+) = sulfinamide-CoA + NADP(+). The catalysed reaction is S-nitrosoglutathione + NADPH + H(+) = S-(hydroxysulfenamide)glutathione + NADP(+). Its function is as follows. Catalyzes the NADPH-dependent reduction of a wide variety of carbonyl-containing compounds to their corresponding alcohols. Displays enzymatic activity towards endogenous metabolites such as aromatic and aliphatic aldehydes, ketones, monosaccharides and bile acids. Acts as an aldehyde-detoxification enzyme. Also acts as an inhibitor of protein S-nitrosylation by mediating degradation of S-nitroso-coenzyme A (S-nitroso-CoA), a cofactor required to S-nitrosylate proteins. Also acts as a S-nitroso-glutathione reductase by catalyzing the NADPH-dependent reduction of S-nitrosoglutathione. Displays no reductase activity towards retinoids. This is Aldo-keto reductase family 1 member A1 (AKR1A1) from Gallus gallus (Chicken).